A 337-amino-acid polypeptide reads, in one-letter code: Putative long-chain-alcohol O-fatty-acyltransferase 10 (337 aa).

The next 8 membrane-spanning stretches (helical) occupy residues 7–27, 38–58, 59–79, 82–102, 142–162, 228–248, 254–274, and 285–305; these read SFVKVWGSAIISVSYCYYIPS, SVLPVCVLFLVLPLFFVFTIF, SSTTAFCLSILANFKLILFAF, GPLLPLPTNLFRFICFTCLPI, ILLLGLYPLHLYIVLDVLLTI, MGCMTTFFVSGLIHELVYFYI, TLEVTWFFVLHGVCTAMEIAV, and MLLRLITVGFLVVTGDLLFFG.

The protein belongs to the wax synthase family.

The protein resides in the membrane. The enzyme catalyses a long chain fatty alcohol + a fatty acyl-CoA = a wax ester + CoA. Functionally, catalyzes the final step in the synthesis of long-chain linear esters (waxes). The sequence is that of Putative long-chain-alcohol O-fatty-acyltransferase 10 from Arabidopsis thaliana (Mouse-ear cress).